The following is a 200-amino-acid chain: MISSIYIFKILLSYLGVEYEINQLSEINQEFTNKLESYNQFIKHTQKDEDYLLGQSAVISRYISNNHNFSGKSLQESARVDDIVESVLEIIEEYVLPIINSNIINEEITKLLCTHFNDFENQLSKSTFSAGDSTTLADLYLFILYDITLRYLENHGHLAHHFNEKYPHLERLKLHFLSNKSVSEFINSNNINSQSSQLII.

A GST N-terminal domain is found at 1 to 71 (MISSIYIFKI…YISNNHNFSG (71 aa)). In terms of domain architecture, GST C-terminal spans 73–195 (SLQESARVDD…INSNNINSQS (123 aa)).

This sequence belongs to the GST superfamily.

The chain is Glutathione S-transferase domain-containing protein DDB_G0273153/DDB_G0273923 from Dictyostelium discoideum (Social amoeba).